Here is a 550-residue protein sequence, read N- to C-terminus: Integral membrane protein DGCR2/IDD (550 aa).

An N-terminal signal peptide occupies residues M1–V20. Over T21 to R349 the chain is Extracellular. Residues L28–E68 form the LDL-receptor class A domain. Disulfide bonds link C30/C44, C37/C57, and C51/C66. The interval V69–G92 is disordered. Residues G71–G92 are compositionally biased toward basic and acidic residues. Positions C115–F241 constitute a C-type lectin domain. 2 disulfides stabilise this stretch: C145/C265 and C233/C257. Residues N149 and N196 are each glycosylated (N-linked (GlcNAc...) asparagine). Positions T270–L333 constitute a VWFC domain. Residues L350 to V368 form a helical membrane-spanning segment. At H369 to V550 the chain is on the cytoplasmic side. At S381 the chain carries Phosphoserine. Residues A500–V550 form a disordered region.

As to expression, predominantly expressed in brain, heart, lung and fetal kidney. Low levels in liver and adult kidney.

It is found in the membrane. Functionally, putative adhesion receptor, that could be involved in cell-cell or cell-matrix interactions required for normal cell differentiation and migration. The protein is Integral membrane protein DGCR2/IDD (DGCR2) of Homo sapiens (Human).